The sequence spans 103 residues: BLOC-1-related complex subunit 7 (103 aa).

The protein belongs to the BORCS7 family.

The protein resides in the lysosome membrane. As part of a BORC-like complex may play a role in lysosomes movement and localization at the cell periphery. Associated with the cytosolic face of lysosomes, this complex may couple lysosomes to microtubule plus-end-directed kinesin motor. The chain is BLOC-1-related complex subunit 7 from Danio rerio (Zebrafish).